We begin with the raw amino-acid sequence, 134 residues long: Probable glycine cleavage system H protein (134 aa).

In terms of domain architecture, Lipoyl-binding spans 29–110 (TVLVGITDYA…PYENWIAKLK (82 aa)). Residue Lys-70 is modified to N6-lipoyllysine.

This sequence belongs to the GcvH family. In terms of assembly, the glycine cleavage system is composed of four proteins: P, T, L and H. It depends on (R)-lipoate as a cofactor.

The glycine cleavage system catalyzes the degradation of glycine. The H protein shuttles the methylamine group of glycine from the P protein to the T protein. The sequence is that of Probable glycine cleavage system H protein from Thermococcus gammatolerans (strain DSM 15229 / JCM 11827 / EJ3).